The following is a 143-amino-acid chain: Small ribosomal subunit protein uS11c (143 aa).

The protein belongs to the universal ribosomal protein uS11 family. Part of the 30S ribosomal subunit.

The protein resides in the plastid. It localises to the chloroplast. The chain is Small ribosomal subunit protein uS11c from Hordeum vulgare (Barley).